The primary structure comprises 228 residues: Ribose-5-phosphate isomerase A (228 aa).

Substrate is bound by residues 29-32 (TGST), 85-88 (DGAD), and 98-101 (KGGG). Glutamate 107 acts as the Proton acceptor in catalysis. Lysine 125 serves as a coordination point for substrate.

It belongs to the ribose 5-phosphate isomerase family. Homodimer.

The enzyme catalyses aldehydo-D-ribose 5-phosphate = D-ribulose 5-phosphate. Its pathway is carbohydrate degradation; pentose phosphate pathway; D-ribose 5-phosphate from D-ribulose 5-phosphate (non-oxidative stage): step 1/1. Functionally, catalyzes the reversible conversion of ribose-5-phosphate to ribulose 5-phosphate. This chain is Ribose-5-phosphate isomerase A, found in Staphylococcus aureus (strain MRSA252).